A 437-amino-acid polypeptide reads, in one-letter code: Cytochrome b (437 aa).

Residues tryptophan 45–leucine 65 form a helical membrane-spanning segment. Heme b is bound by residues histidine 97 and histidine 111. The next 9 membrane-spanning stretches (helical) occupy residues glycine 100–serine 120, tryptophan 129–leucine 149, phenylalanine 156–isoleucine 176, phenylalanine 194–tryptophan 214, phenylalanine 248–alanine 268, phenylalanine 298–valine 318, phenylalanine 330–aspartate 350, methionine 365–threonine 385, and tryptophan 391–leucine 411. Residues histidine 198 and histidine 212 each contribute to the heme b site.

It belongs to the cytochrome b family. As to quaternary structure, the main subunits of complex b-c1 are: cytochrome b, cytochrome c1 and the Rieske protein. The cofactor is heme b.

The protein localises to the cell membrane. Component of the ubiquinol-cytochrome c reductase complex (complex III or cytochrome b-c1 complex), which is a respiratory chain that generates an electrochemical potential coupled to ATP synthesis. The polypeptide is Cytochrome b (petB) (Rhodobacter capsulatus (strain ATCC BAA-309 / NBRC 16581 / SB1003)).